Reading from the N-terminus, the 423-residue chain is COP9 signalosome complex subunit 3 (423 aa).

The region spanning 197–365 (NFERALYFFE…GMVCFHDNPE (169 aa)) is the PCI domain. The segment at 402 to 423 (QFVQKSMGTQEDDVGSKTSSYS) is disordered.

This sequence belongs to the CSN3 family. Component of the CSN complex, probably composed of cops1, cops2, cops3, cops4, cops5, cops6, cops7, cops8 and cops9.

Its subcellular location is the cytoplasm. The protein localises to the nucleus. Its function is as follows. Component of the COP9 signalosome complex (CSN), a complex involved in various cellular and developmental processes. The CSN complex is an essential regulator of the ubiquitin (Ubl) conjugation pathway by mediating the deneddylation of the cullin subunits of E3 ligase complexes, leading to modify the Ubl ligase activity. In Danio rerio (Zebrafish), this protein is COP9 signalosome complex subunit 3 (cops3).